A 296-amino-acid chain; its full sequence is Uridine phosphorylase A (296 aa).

Residues Gly46, Arg77, and Arg121–Thr124 each bind phosphate. Uridine contacts are provided by residues Ser125–Gly126 and Gln201–Arg203.

It belongs to the PNP/UDP phosphorylase family. In terms of assembly, homodimer.

The catalysed reaction is uridine + phosphate = alpha-D-ribose 1-phosphate + uracil. It participates in pyrimidine metabolism; UMP biosynthesis via salvage pathway; uracil from uridine (phosphorylase route): step 1/1. Catalyzes the reversible phosphorylytic cleavage of uridine and deoxyuridine to uracil and ribose- or deoxyribose-1-phosphate. The produced molecules are then utilized as carbon and energy sources or in the rescue of pyrimidine bases for nucleotide synthesis. The polypeptide is Uridine phosphorylase A (Schistosoma mansoni (Blood fluke)).